The sequence spans 235 residues: Deoxyribose-phosphate aldolase (235 aa).

D107 functions as the Proton donor/acceptor in the catalytic mechanism. Residue K167 is the Schiff-base intermediate with acetaldehyde of the active site. The active-site Proton donor/acceptor is the K197.

Belongs to the DeoC/FbaB aldolase family. DeoC type 1 subfamily. Homotetramer.

It localises to the cytoplasm. The catalysed reaction is 2-deoxy-D-ribose 5-phosphate = D-glyceraldehyde 3-phosphate + acetaldehyde. It participates in carbohydrate degradation; 2-deoxy-D-ribose 1-phosphate degradation; D-glyceraldehyde 3-phosphate and acetaldehyde from 2-deoxy-alpha-D-ribose 1-phosphate: step 2/2. Catalyzes a reversible aldol reaction between acetaldehyde and D-glyceraldehyde 3-phosphate to generate 2-deoxy-D-ribose 5-phosphate. In Aeropyrum pernix (strain ATCC 700893 / DSM 11879 / JCM 9820 / NBRC 100138 / K1), this protein is Deoxyribose-phosphate aldolase.